A 59-amino-acid polypeptide reads, in one-letter code: Conotoxin ViVA (59 aa).

Residues 1–19 form the signal peptide; that stretch reads MRCVPVFIILLLLIPSASS. The propeptide occupies 20-46; that stretch reads AAVQPKTEKDDVPLASVHDSALRILSR. Position 47 is a pyrrolidone carboxylic acid (Gln47). 2 disulfide bridges follow: Cys48-Cys55 and Cys49-Cys56. Ile58 is modified (isoleucine amide).

Belongs to the conotoxin T superfamily. As to expression, expressed by the venom duct.

Its subcellular location is the secreted. The polypeptide is Conotoxin ViVA (Conus virgo (Virgin cone)).